The sequence spans 883 residues: Histidine--tRNA ligase, cytoplasmic (883 aa).

This sequence belongs to the class-II aminoacyl-tRNA synthetase family.

The protein resides in the cytoplasm. Its subcellular location is the cytosol. The catalysed reaction is tRNA(His) + L-histidine + ATP = L-histidyl-tRNA(His) + AMP + diphosphate + H(+). This Arabidopsis thaliana (Mouse-ear cress) protein is Histidine--tRNA ligase, cytoplasmic.